Reading from the N-terminus, the 357-residue chain is Peptide chain release factor 1 (357 aa).

Gln-236 is subject to N5-methylglutamine.

The protein belongs to the prokaryotic/mitochondrial release factor family. In terms of processing, methylated by PrmC. Methylation increases the termination efficiency of RF1.

The protein resides in the cytoplasm. Functionally, peptide chain release factor 1 directs the termination of translation in response to the peptide chain termination codons UAG and UAA. This Mycobacterium marinum (strain ATCC BAA-535 / M) protein is Peptide chain release factor 1.